Reading from the N-terminus, the 1997-residue chain is Nucleoprotein TPR (1997 aa).

Coiled-coil stretches lie at residues 1 to 36, 101 to 277, 335 to 1103, and 1129 to 1305; these read QEQH…NDLL, EIVK…HQMT, DSTE…IKTI, and AEAS…EPQE. Composition is skewed to basic and acidic residues over residues 672–702 and 1290–1305; these read SSEY…KTVE and REQQ…EPQE. Disordered stretches follow at residues 672 to 706, 1290 to 1352, 1438 to 1529, 1561 to 1752, 1795 to 1832, and 1870 to 1997; these read SSEY…QMEQ, REQQ…AAVP, AFVQ…KTET, IQTS…RRQS, AIHS…ASQG, and ENPA…RSNI. 3 stretches are compositionally biased toward polar residues: residues 1306-1321, 1328-1347, and 1446-1487; these read TTRI…QPTT, SANT…SKVT, and SHAT…SSSI. Basic and acidic residues predominate over residues 1511 to 1529; sequence DQQRTKKRKEEDIEEKTET. Over residues 1561–1587 the composition is skewed to polar residues; the sequence is IQTSQVIESQAPEQLQNVQSTQDSLQD. Acidic residues-rich tracts occupy residues 1601-1637 and 1644-1667; these read SDEE…DSNE and GNED…ETED. Polar residues-rich tracts occupy residues 1692–1709, 1817–1830, and 1879–1899; these read AEST…SASD, QASS…QLAS, and HASQ…TSVD. The span at 1902 to 1915 shows a compositional bias: acidic residues; it reads AADEGDEVFVEAES. A compositionally biased stretch (low complexity) spans 1950-1959; sequence SSSIADTSSS.

This sequence belongs to the TPR family. Homodimer. Part of the nuclear pore complex (NPC). Interacts with nuclear receptor KPNB1; the interaction occurs in a RanGTP-dependent manner. Associates with the Importin alpha/Importin beta receptor. In terms of tissue distribution, expressed in epithelial cells, oocytes and egg (at protein level).

Its subcellular location is the nucleus. It is found in the nucleus membrane. It localises to the nucleus envelope. The protein resides in the nuclear pore complex. The protein localises to the cytoplasm. Its subcellular location is the cytoskeleton. It is found in the spindle. It localises to the chromosome. The protein resides in the centromere. The protein localises to the kinetochore. Functionally, component of the nuclear pore complex (NPC), a complex required for the trafficking across the nuclear envelope. Functions as a scaffolding element in the nuclear phase of the NPC essential for normal nucleocytoplasmic transport of proteins and mRNAs, plays a role in the establishment of nuclear-peripheral chromatin compartmentalization in interphase, and in the mitotic spindle checkpoint signaling during mitosis. Involved in the quality control and retention of unspliced mRNAs in the nucleus. Implicated in nuclear export of mRNAs transcribed from heat shock gene promoters. May play a limited role in the regulation of nuclear protein export. May be involved in the formation and/or maintenance of NPC-associated perinuclear heterochromatin exclusion zones (HEZs). Finally, may act as a spatial regulator of the spindle-assembly checkpoint (SAC) response. The chain is Nucleoprotein TPR from Xenopus laevis (African clawed frog).